Consider the following 135-residue polypeptide: Protein PsiE homolog (135 aa).

A run of 4 helical transmembrane segments spans residues 20–40, 54–74, 82–102, and 107–127; these read VGLI…TIHL, YMLI…ALIV, HFPL…LIIV, and PIDT…LYLA.

Belongs to the PsiE family.

It localises to the cell inner membrane. In Yersinia pestis (strain Pestoides F), this protein is Protein PsiE homolog.